The following is a 1132-amino-acid chain: MIATPLKHSRIYLPPEASSQRRNLPMDAIFFDSIPSGTLTPVKDLVKYQNSSLKLNDHKKNQFLKMTTFNNKNIFQSTMLTEATTSNSSLDISAIKPNKDGLKNKANYESPGKIFLRMKEKVLRDKQEQPSRNSSLLEPQKSGNNETFTPNRVEKKKLQHTYLCEEKENNKSFQSDDSSLRASVQGVPLESSNNDIFLPVKQKIQCQQEKKAPLHNLTYELPTLNQEQENFLAVEARNKTLTRAQLAKQIFHSKESIVATTKSKKDTFVLESVDSADEQFQNTNAETLSTNCIPIKNGSLLMVSDSERTTEGTSQQKVKEGNGKTVPGETGLPGSMKDTCKIVLATPRLHITIPRRSKRNISKLSPPRIFQTVTNGLKKNQVVQLQEWMIKSINNNTAICVEGKLIDVTNIYWHSNVIIERIEHNKLRTISGNVYILKGMIDQISMKEAGYPNYLIRKFMFGFPENWKEHIDNFLEQLRAGEKNREKTKQKQKTGRSVRDIRKSMKNDARENQTDTAQRATTTYDFDCDNLELKSNKHSESPGATELNMCHSNCQNKPTLRFPDDQVNNTIQNGGGDDLSNQELIGKKEYKMSSKKLKIGERTNERIIKSQKQETTEELDVSIDILTSREQFFSDEERKYMAINQKKAYILVTPLKSRKVIEQRCMRYNLSAGTIKAVTDFVIPECQKKSPISKSMGTLENTFEGHKSKNKEDCDERDLLTVNRKIKISNLEKEQMLTSDFKKNTRLLPKLKKIENQVAMSFYKHQSSPDLSSEESETEKEIKRKAEVKKTKAGNTKEAVVHLRKSTRNTSNIPVILEPETEESENEFYIKQKKARPSVKETLQKSGVRKEFPITEAVGSDKTNRHPLECLPGLIQDKEWNEKELQKLHCAFASLPKHKPGFWSEVAAAVGSRSPEECQRKYMENPRGKGSQKHVTKKKPANSKGQNGKRGDADQKQTIKITAKVGTLKRKQQMREFLEQLPKDDHDDFFSTTPLQHQRILLPSFQDSEDDDDILPNMDKNPTTPSSVIFPLVKTPQCQHVSPGMLGSINRNDCDKYVFRMQKYHKSNGGIVWGNIKKKLVETDFSTPTPRRKTPFNTDLGENSGIGKLFTNAVESLDEEEKDYYFSNSDSA.

K7 participates in a covalent cross-link: Glycyl lysine isopeptide (Lys-Gly) (interchain with G-Cter in SUMO2). Residue S9 is modified to Phosphoserine. Residue K65 forms a Glycyl lysine isopeptide (Lys-Gly) (interchain with G-Cter in SUMO2) linkage. S110, S131, S135, S172, and S192 each carry phosphoserine. The tract at residues 123–154 (LRDKQEQPSRNSSLLEPQKSGNNETFTPNRVE) is disordered. The span at 130–150 (PSRNSSLLEPQKSGNNETFTP) shows a compositional bias: polar residues. Residues K211 and K262 each participate in a glycyl lysine isopeptide (Lys-Gly) (interchain with G-Cter in SUMO2) cross-link. S299 carries the post-translational modification Phosphoserine. Residues 306-332 (SERTTEGTSQQKVKEGNGKTVPGETGL) are disordered. At S365 the chain carries Phosphoserine. One can recognise an SANTA domain in the interval 383–469 (VQLQEWMIKS…MFGFPENWKE (87 aa)). The disordered stretch occupies residues 482-518 (EKNREKTKQKQKTGRSVRDIRKSMKNDARENQTDTAQ). Positions 497–513 (SVRDIRKSMKNDARENQ) are enriched in basic and acidic residues. Residues K534, K612, K639, and K647 each participate in a glycyl lysine isopeptide (Lys-Gly) (interchain with G-Cter in SUMO2) cross-link. At T653 the chain carries Phosphothreonine. Glycyl lysine isopeptide (Lys-Gly) (interchain with G-Cter in SUMO2) cross-links involve residues K727 and K742. The segment at 765-798 (HQSSPDLSSEESETEKEIKRKAEVKKTKAGNTKE) is disordered. 2 positions are modified to phosphoserine: S772 and S773. Residues 779–790 (EKEIKRKAEVKK) show a composition bias toward basic and acidic residues. Position 821 is a phosphothreonine (T821). Residue S824 is modified to Phosphoserine. K840 is covalently cross-linked (Glycyl lysine isopeptide (Lys-Gly) (interchain with G-Cter in SUMO2)). Phosphoserine is present on S860. The SANT domain occupies 875 to 930 (IQDKEWNEKELQKLHCAFASLPKHKPGFWSEVAAAVGSRSPEECQRKYMENPRGKG). K899 participates in a covalent cross-link: Glycyl lysine isopeptide (Lys-Gly) (interchain with G-Cter in SUMO2). Residues 923–957 (MENPRGKGSQKHVTKKKPANSKGQNGKRGDADQKQ) are disordered. Residues 930–941 (GSQKHVTKKKPA) are compositionally biased toward basic residues. Residues K956, K964, and K983 each participate in a glycyl lysine isopeptide (Lys-Gly) (interchain with G-Cter in SUMO2) cross-link. At S1008 the chain carries Phosphoserine. Residue K1079 forms a Glycyl lysine isopeptide (Lys-Gly) (interchain with G-Cter in SUMO2) linkage. S1086 bears the Phosphoserine mark. A phosphothreonine mark is found at T1087 and T1089. Residues S1104 and S1116 each carry the phosphoserine modification.

As to quaternary structure, interacts with SP1. Interacts with MIS18A. Identified in a complex containing MIS18A, OIP5/MIS18B, MIS18BP1, RBBP7 and RBBP4. Interacts with KAT7/HBO1. Interacts (via N-terminus) with FLNA (via N-terminus).

The protein resides in the nucleus. Its subcellular location is the chromosome. The protein localises to the centromere. Functionally, required for recruitment of CENPA to centromeres and normal chromosome segregation during mitosis. The chain is Mis18-binding protein 1 (MIS18BP1) from Homo sapiens (Human).